We begin with the raw amino-acid sequence, 97 residues long: MALSLEEVRRIAVLARLRLSEEEERTFAGQLSAILDHVRQLEELDVTAVEPMTHALAAGELPARREDAVLPSLTPEEATAAAPAREGTAFKVPRIIE.

The span at 74 to 84 (TPEEATAAAPA) shows a compositional bias: low complexity. Positions 74-97 (TPEEATAAAPAREGTAFKVPRIIE) are disordered.

This sequence belongs to the GatC family. Heterotrimer of A, B and C subunits.

It catalyses the reaction L-glutamyl-tRNA(Gln) + L-glutamine + ATP + H2O = L-glutaminyl-tRNA(Gln) + L-glutamate + ADP + phosphate + H(+). The catalysed reaction is L-aspartyl-tRNA(Asn) + L-glutamine + ATP + H2O = L-asparaginyl-tRNA(Asn) + L-glutamate + ADP + phosphate + 2 H(+). Its function is as follows. Allows the formation of correctly charged Asn-tRNA(Asn) or Gln-tRNA(Gln) through the transamidation of misacylated Asp-tRNA(Asn) or Glu-tRNA(Gln) in organisms which lack either or both of asparaginyl-tRNA or glutaminyl-tRNA synthetases. The reaction takes place in the presence of glutamine and ATP through an activated phospho-Asp-tRNA(Asn) or phospho-Glu-tRNA(Gln). In Anaeromyxobacter dehalogenans (strain 2CP-1 / ATCC BAA-258), this protein is Aspartyl/glutamyl-tRNA(Asn/Gln) amidotransferase subunit C.